A 407-amino-acid chain; its full sequence is Lysophospholipid transporter LplT (407 aa).

A run of 11 helical transmembrane segments spans residues 18–38, 53–73, 91–111, 139–159, 163–183, 229–249, 257–277, 286–306, 310–330, 343–365, and 375–395; these read AVII…FATL, FLQM…GQIA, AGAL…LVGV, LMEA…GVLA, IYGA…ANML, WGAG…ALGI, LLNA…AKLV, LPAG…HNLM, SLLI…NALL, AIAV…YSLV, and IGIG…VWLI.

The protein belongs to the major facilitator superfamily. LplT (TC 2.A.1.42) family.

Its subcellular location is the cell inner membrane. Its function is as follows. Catalyzes the facilitated diffusion of 2-acyl-glycero-3-phosphoethanolamine (2-acyl-GPE) into the cell. The polypeptide is Lysophospholipid transporter LplT (Pectobacterium carotovorum subsp. carotovorum (strain PC1)).